The chain runs to 274 residues: 2,3,4,5-tetrahydropyridine-2,6-dicarboxylate N-succinyltransferase (274 aa).

Arginine 106 and aspartate 143 together coordinate substrate.

The protein belongs to the transferase hexapeptide repeat family. Homotrimer.

Its subcellular location is the cytoplasm. The catalysed reaction is (S)-2,3,4,5-tetrahydrodipicolinate + succinyl-CoA + H2O = (S)-2-succinylamino-6-oxoheptanedioate + CoA. It participates in amino-acid biosynthesis; L-lysine biosynthesis via DAP pathway; LL-2,6-diaminopimelate from (S)-tetrahydrodipicolinate (succinylase route): step 1/3. This is 2,3,4,5-tetrahydropyridine-2,6-dicarboxylate N-succinyltransferase from Herminiimonas arsenicoxydans.